The primary structure comprises 231 residues: 2-amino-5-formylamino-6-ribosylaminopyrimidin-4(3H)-one 5'-monophosphate deformylase (231 aa).

The Fe cation site is built by E29, H31, D40, and H110.

This sequence belongs to the creatininase superfamily. FAPy deformylase family. In terms of assembly, homodimer. Requires Fe(2+) as cofactor. It depends on Zn(2+) as a cofactor.

The catalysed reaction is 2-amino-5-formylamino-6-(5-phospho-D-ribosylamino)pyrimidin-4(3H)-one + H2O = 2,5-diamino-6-(1-D-ribosylamino)pyrimidin-4(3H)-one 5'-phosphate + formate + H(+). The protein operates within cofactor biosynthesis; coenzyme F420 biosynthesis. Its pathway is cofactor biosynthesis; riboflavin biosynthesis. Its function is as follows. Catalyzes the hydrolysis of the formamide of 2-amino-5-formylamino-6-ribosylamino-4(3H)-pyrimidinone 5'-monophosphate (FAPy) to form 2,5-diamino-6-ribosylamino-4(3H)-pyrimidinone 5'-phosphate (APy). This is 2-amino-5-formylamino-6-ribosylaminopyrimidin-4(3H)-one 5'-monophosphate deformylase from Methanothermobacter marburgensis (strain ATCC BAA-927 / DSM 2133 / JCM 14651 / NBRC 100331 / OCM 82 / Marburg) (Methanobacterium thermoautotrophicum).